A 545-amino-acid polypeptide reads, in one-letter code: Glucose-6-phosphate isomerase (545 aa).

The active-site Proton donor is the Glu-351. Residues His-382 and Lys-510 contribute to the active site.

It belongs to the GPI family.

It localises to the cytoplasm. The enzyme catalyses alpha-D-glucose 6-phosphate = beta-D-fructose 6-phosphate. Its pathway is carbohydrate biosynthesis; gluconeogenesis. It functions in the pathway carbohydrate degradation; glycolysis; D-glyceraldehyde 3-phosphate and glycerone phosphate from D-glucose: step 2/4. Functionally, catalyzes the reversible isomerization of glucose-6-phosphate to fructose-6-phosphate. This chain is Glucose-6-phosphate isomerase, found in Shewanella pealeana (strain ATCC 700345 / ANG-SQ1).